The primary structure comprises 266 residues: MLHVSMVGCGAIGRGVMELLKSDPEVVFDVVIVPEHTMDEARDAVTALAPGARVATHLDDQRPDLLVECAGHHALEEHIVPALERGIPCMVVSVGALSEPGMAERLEAAARRGGTQVQLLSGAIGAIDALAAARVGGLDEVIYTGRKPARAWAGTPAEQLFDLDALTEATVIFEGTARDAARLYPKNANVAATVSLAGLGLDRTSVKLLADPHAVENVHHVEARGAFGGFELTMRGKPLAANPKTSALTVFSVVRALGNRAHAVSI.

NAD(+) is bound by residues Ala-123 and Asn-189. The active site involves His-219.

This sequence belongs to the L-aspartate dehydrogenase family.

It carries out the reaction L-aspartate + NADP(+) + H2O = oxaloacetate + NH4(+) + NADPH + H(+). The catalysed reaction is L-aspartate + NAD(+) + H2O = oxaloacetate + NH4(+) + NADH + H(+). It participates in cofactor biosynthesis; NAD(+) biosynthesis; iminoaspartate from L-aspartate (dehydrogenase route): step 1/1. In terms of biological role, specifically catalyzes the NAD or NADP-dependent dehydrogenation of L-aspartate to iminoaspartate. In Cupriavidus necator (strain ATCC 17699 / DSM 428 / KCTC 22496 / NCIMB 10442 / H16 / Stanier 337) (Ralstonia eutropha), this protein is L-aspartate dehydrogenase.